Reading from the N-terminus, the 92-residue chain is U21-hexatoxin-Hi1a (92 aa).

An N-terminal signal peptide occupies residues 1 to 19 (MKTILSMLIFVALFAAIVG). Cystine bridges form between C41-C55, C48-C67, C54-C82, and C85-C92.

It belongs to the neurotoxin 21 family. As to expression, expressed by the venom gland.

The protein localises to the secreted. In terms of biological role, potent insecticidal toxin with probable ion channel impairing activity. In vivo, reversibly paralyzes all flies within 30 minutes, even at low dose (0.3 nmol/g). This is U21-hexatoxin-Hi1a from Hadronyche infensa (Fraser island funnel-web spider).